We begin with the raw amino-acid sequence, 348 residues long: Flagellar P-ring protein (348 aa).

The first 16 residues, Met1 to Ala16, serve as a signal peptide directing secretion.

It belongs to the FlgI family. As to quaternary structure, the basal body constitutes a major portion of the flagellar organelle and consists of four rings (L,P,S, and M) mounted on a central rod.

The protein resides in the periplasm. Its subcellular location is the bacterial flagellum basal body. Functionally, assembles around the rod to form the L-ring and probably protects the motor/basal body from shearing forces during rotation. This Campylobacter lari (strain RM2100 / D67 / ATCC BAA-1060) protein is Flagellar P-ring protein.